The following is a 419-amino-acid chain: Tryptophan synthase beta chain (419 aa).

Position 86 is an N6-(pyridoxal phosphate)lysine (Lys86). A compositionally biased stretch (basic and acidic residues) spans 394 to 403; sequence VEQQKVEQQK. The interval 394–419 is disordered; it reads VEQQKVEQQKADNQNTEKNNQESGNE. Positions 404–419 are enriched in polar residues; it reads ADNQNTEKNNQESGNE.

The protein belongs to the TrpB family. As to quaternary structure, tetramer of two alpha and two beta chains. The cofactor is pyridoxal 5'-phosphate.

The enzyme catalyses (1S,2R)-1-C-(indol-3-yl)glycerol 3-phosphate + L-serine = D-glyceraldehyde 3-phosphate + L-tryptophan + H2O. It participates in amino-acid biosynthesis; L-tryptophan biosynthesis; L-tryptophan from chorismate: step 5/5. The beta subunit is responsible for the synthesis of L-tryptophan from indole and L-serine. The polypeptide is Tryptophan synthase beta chain (Shewanella halifaxensis (strain HAW-EB4)).